The following is a 544-amino-acid chain: Coiled-coil domain-containing protein 82 (544 aa).

Residues 1–14 (MIHVRRHETRRNSK) are compositionally biased toward basic residues. Residues 1–294 (MIHVRRHETR…ESDEDGDDYI (294 aa)) form a disordered region. Residues 16–27 (HVPEQKSRVDWR) show a composition bias toward basic and acidic residues. A compositionally biased stretch (acidic residues) spans 39–67 (DSDEELDSEEFDSDEELDSDESFENDEEL). Serine 88, serine 131, serine 154, serine 195, and serine 219 each carry phosphoserine. Residues 88 to 108 (SKIQSEGNDSKCLINSGNGST) are compositionally biased toward polar residues. Residues 112–132 (ETNKIKHRNIDLQDQEKHLSQ) are compositionally biased toward basic and acidic residues. The span at 223–248 (MEQKTPEKTLAAQKREKLQKLKELSK) shows a compositional bias: basic and acidic residues. Threonine 227 carries the post-translational modification Phosphothreonine. The stretch at 229–256 (EKTLAAQKREKLQKLKELSKQRSRQRRS) forms a coiled coil. A compositionally biased stretch (acidic residues) spans 273–294 (DEVDEEEEEDNYESDEDGDDYI). At serine 329 the chain carries Phosphoserine.

This chain is Coiled-coil domain-containing protein 82 (CCDC82), found in Homo sapiens (Human).